A 210-amino-acid polypeptide reads, in one-letter code: uncharacterized protein (210 aa).

This is an uncharacterized protein from Dictyostelium discoideum (Social amoeba).